The sequence spans 1222 residues: Protein SCP160 (1222 aa).

Polar residues predominate over residues 1 to 12; that stretch reads MSEEQTAIDSPP. The segment at 1–59 is disordered; it reads MSEEQTAIDSPPSTVEGSVETVTTIDSPSTTASTIAATAEEHPQLEKKPTPLPSLKDLP. A compositionally biased stretch (low complexity) spans 13–38; the sequence is STVEGSVETVTTIDSPSTTASTIAAT. Basic and acidic residues predominate over residues 39–49; sequence AEEHPQLEKKP. At Thr-50 the chain carries Phosphothreonine. Ser-54, Ser-63, Ser-85, Ser-87, and Ser-89 each carry phosphoserine. The interval 79–98 is disordered; sequence KPAVSNSPSPSPSAPSLTTG. The KH 1 domain occupies 177 to 249; sequence PINAVIEVPS…ESVNLAKAKI (73 aa). At Ser-630 the chain carries Phosphoserine. KH domains lie at 634–702, 712–771, 782–851, 861–929, and 939–1001; these read KSKM…KKYL, IITK…HEEL, GHKM…AKRV, FVTE…VEEI, and SVTK…EKKI. Ser-1112 bears the Phosphoserine mark. Residues 1153-1216 form the KH 7 domain; the sequence is YAGYVWGADT…AGVEKAGEMV (64 aa).

The protein localises to the endoplasmic reticulum membrane. The protein resides in the nucleus membrane. In terms of biological role, involved in the control of mitotic chromosome transmission. Required during cell division for faithful partitioning of the ER-nuclear envelope membranes which, in S.cerevisiae, enclose the duplicated chromosomes. This chain is Protein SCP160 (SCP160), found in Saccharomyces cerevisiae (strain ATCC 204508 / S288c) (Baker's yeast).